Reading from the N-terminus, the 1031-residue chain is Ookinete maturation protein 1 (1031 aa).

Disordered stretches follow at residues 125–184 (HNEN…PELE), 340–405 (KEAE…DGMR), and 609–697 (DAEL…NDSI). Positions 141–168 (QKLKKKKKIKKGTKKKSINKISILKHKS) are enriched in basic residues. Over residues 171 to 180 (SFPSTQNENT) the composition is skewed to polar residues. A compositionally biased stretch (basic and acidic residues) spans 340–357 (KEAEEEERKKNEDEHILE). Over residues 377–394 (LGKSFKNNESFELNSPQK) the composition is skewed to polar residues. The stretch at 581-646 (IDEENSVFVE…ETQMAGKEEK (66 aa)) forms a coiled coil. Residues 610–648 (AELRKDEEEDKSKNNEKDSKSEERDILETQMAGKEEKPV) are compositionally biased toward basic and acidic residues. A compositionally biased stretch (basic residues) spans 649–659 (LKKKKKNKGKQ). Basic and acidic residues predominate over residues 660–686 (RNREGKGVVEKGYDAKREKKENEEKNK).

In terms of biological role, in the mosquito vector midgut, plays a role in ookinete development. The chain is Ookinete maturation protein 1 from Plasmodium berghei (strain Anka).